The sequence spans 227 residues: MSADDQKRISGEAAAELVENGMVVGLGTGSTAAWFVKALAARGLKDIRGVPTSDATAALARELGIPLAALDDVKTVDLTVDGADEIGPGLSLIKGGGAALLREKLVWEASTRCVVIADAAKRVPALGKFPLPIEVVRFGHVHTGYRLADIAAEFDLPPPRLRTAERGMVVTDGGNLIYDMASGKIEDPTALAAALKSVTGVVDHGLFLDLADEALVGTDEGVVRLQP.

Substrate is bound by residues Thr28–Thr31, Asp81–Asp84, and Lys94–Gly97. Glu103 (proton acceptor) is an active-site residue. Lys121 contributes to the substrate binding site.

This sequence belongs to the ribose 5-phosphate isomerase family. As to quaternary structure, homodimer.

It carries out the reaction aldehydo-D-ribose 5-phosphate = D-ribulose 5-phosphate. It participates in carbohydrate degradation; pentose phosphate pathway; D-ribose 5-phosphate from D-ribulose 5-phosphate (non-oxidative stage): step 1/1. In terms of biological role, catalyzes the reversible conversion of ribose-5-phosphate to ribulose 5-phosphate. The polypeptide is Ribose-5-phosphate isomerase A (Caulobacter vibrioides (strain ATCC 19089 / CIP 103742 / CB 15) (Caulobacter crescentus)).